Consider the following 247-residue polypeptide: Ribonuclease PH (247 aa).

Residues arginine 87 and 125–127 (GTR) contribute to the phosphate site.

It belongs to the RNase PH family. Homohexameric ring arranged as a trimer of dimers.

It carries out the reaction tRNA(n+1) + phosphate = tRNA(n) + a ribonucleoside 5'-diphosphate. In terms of biological role, phosphorolytic 3'-5' exoribonuclease that plays an important role in tRNA 3'-end maturation. Removes nucleotide residues following the 3'-CCA terminus of tRNAs; can also add nucleotides to the ends of RNA molecules by using nucleoside diphosphates as substrates, but this may not be physiologically important. Probably plays a role in initiation of 16S rRNA degradation (leading to ribosome degradation) during starvation. The chain is Ribonuclease PH from Nostoc sp. (strain PCC 7120 / SAG 25.82 / UTEX 2576).